Here is a 1411-residue protein sequence, read N- to C-terminus: Protein three rows (1411 aa).

The interval 1065–1071 is separase cleavage-site; sequence VEPIRKQ. Disordered regions lie at residues 1221–1240, 1268–1301, and 1330–1411; these read LEPP…NISP, VRPA…KSPK, and AKST…RHRN. 2 stretches are compositionally biased toward low complexity: residues 1270–1289 and 1386–1398; these read PASS…NASS and TAEQ…TATP.

In terms of assembly, interacts with pim and Sse. Cleavage of thr contributes to inactivation of Sse.

It localises to the cytoplasm. Functionally, required specifically for chromosome disjunction during all mitoses; maternally provided protein is sufficient until mitosis 14 then zygotic protein is required. Involved in formation and/or maintenance of epithelial structures: bud extension during Malpighian tubule development, and foregut and hindgut morphogenesis. In Drosophila virilis (Fruit fly), this protein is Protein three rows (thr).